We begin with the raw amino-acid sequence, 89 residues long: Small ribosomal subunit protein uS15 (89 aa).

This sequence belongs to the universal ribosomal protein uS15 family. In terms of assembly, part of the 30S ribosomal subunit. Forms a bridge to the 50S subunit in the 70S ribosome, contacting the 23S rRNA.

Its function is as follows. One of the primary rRNA binding proteins, it binds directly to 16S rRNA where it helps nucleate assembly of the platform of the 30S subunit by binding and bridging several RNA helices of the 16S rRNA. In terms of biological role, forms an intersubunit bridge (bridge B4) with the 23S rRNA of the 50S subunit in the ribosome. The sequence is that of Small ribosomal subunit protein uS15 from Chlamydia caviae (strain ATCC VR-813 / DSM 19441 / 03DC25 / GPIC) (Chlamydophila caviae).